The following is a 158-amino-acid chain: Transcription elongation factor GreA (158 aa).

Residues Glu53 to Gln73 adopt a coiled-coil conformation.

This sequence belongs to the GreA/GreB family.

Functionally, necessary for efficient RNA polymerase transcription elongation past template-encoded arresting sites. The arresting sites in DNA have the property of trapping a certain fraction of elongating RNA polymerases that pass through, resulting in locked ternary complexes. Cleavage of the nascent transcript by cleavage factors such as GreA or GreB allows the resumption of elongation from the new 3'terminus. GreA releases sequences of 2 to 3 nucleotides. The chain is Transcription elongation factor GreA from Thioalkalivibrio sulfidiphilus (strain HL-EbGR7).